The chain runs to 238 residues: Urease subunit alpha (238 aa).

Residues 1-102 (MKLTPKELDK…LVTVHTPIES (102 aa)) are urease gamma. The urease beta stretch occupies residues 103–238 (KGKLVPGELF…DDNYVKTIKE (136 aa)).

This sequence in the N-terminal section; belongs to the urease gamma subunit family. In the C-terminal section; belongs to the urease beta subunit family. As to quaternary structure, heterohexamer of 3 UreA (alpha) and 3 UreB (beta) subunits.

It localises to the cytoplasm. It catalyses the reaction urea + 2 H2O + H(+) = hydrogencarbonate + 2 NH4(+). It functions in the pathway nitrogen metabolism; urea degradation; CO(2) and NH(3) from urea (urease route): step 1/1. The sequence is that of Urease subunit alpha from Helicobacter acinonychis (strain Sheeba).